The primary structure comprises 634 residues: DNA-directed RNA polymerase subunit gamma (634 aa).

Zn(2+) is bound by residues cysteine 74, cysteine 76, cysteine 89, and cysteine 92. Residues aspartate 471, aspartate 473, and aspartate 475 each contribute to the Mg(2+) site.

It belongs to the RNA polymerase beta' chain family. RpoC1 subfamily. In cyanobacteria the RNAP catalytic core is composed of 2 alpha, 1 beta, 1 beta', 1 gamma and 1 omega subunit. When a sigma factor is associated with the core the holoenzyme is formed, which can initiate transcription. Mg(2+) serves as cofactor. Zn(2+) is required as a cofactor.

It catalyses the reaction RNA(n) + a ribonucleoside 5'-triphosphate = RNA(n+1) + diphosphate. In terms of biological role, DNA-dependent RNA polymerase catalyzes the transcription of DNA into RNA using the four ribonucleoside triphosphates as substrates. The chain is DNA-directed RNA polymerase subunit gamma from Prochlorococcus marinus (strain MIT 9515).